The following is a 257-amino-acid chain: uncharacterized protein (257 aa).

The signal sequence occupies residues Met-1–Ala-22. Residue Cys-23 is the site of N-palmitoyl cysteine attachment. The S-diacylglycerol cysteine moiety is linked to residue Cys-23.

Belongs to the staphylococcal tandem lipoprotein family.

Its subcellular location is the cell membrane. This is an uncharacterized protein from Staphylococcus aureus (strain NCTC 8325 / PS 47).